Here is a 185-residue protein sequence, read N- to C-terminus: Ribosome-recycling factor (185 aa).

Belongs to the RRF family.

It is found in the cytoplasm. Its function is as follows. Responsible for the release of ribosomes from messenger RNA at the termination of protein biosynthesis. May increase the efficiency of translation by recycling ribosomes from one round of translation to another. This is Ribosome-recycling factor from Zymomonas mobilis subsp. mobilis (strain ATCC 31821 / ZM4 / CP4).